The chain runs to 233 residues: Gamma-interferon-responsive lysosomal thiol protein (233 aa).

Positions 1–26 (MVSSSLTKLVFFGCLLLLTFTDNLVA) are cleaved as a signal peptide. A disulfide bond links cysteine 42 and cysteine 45. N-linked (GlcNAc...) asparagine glycosylation is found at asparagine 80 and asparagine 207. The propeptide at 200–233 (TTLPKVCNSSASMSKSPERKWKLQVSYANKATNY) is removed in mature form.

The protein belongs to the GILT family. In terms of assembly, dimer; disulfide-linked. Expressed in the outer integument of seed coat.

Its subcellular location is the secreted. It localises to the lysosome. In terms of biological role, lysosomal thiol reductase that can reduce protein disulfide bonds. May facilitate the complete unfolding of proteins destined for lysosomal degradation. This is Gamma-interferon-responsive lysosomal thiol protein from Arabidopsis thaliana (Mouse-ear cress).